The chain runs to 166 residues: Peptide methionine sulfoxide reductase MsrA (166 aa).

Residue C11 is part of the active site.

Belongs to the MsrA Met sulfoxide reductase family.

The catalysed reaction is L-methionyl-[protein] + [thioredoxin]-disulfide + H2O = L-methionyl-(S)-S-oxide-[protein] + [thioredoxin]-dithiol. It carries out the reaction [thioredoxin]-disulfide + L-methionine + H2O = L-methionine (S)-S-oxide + [thioredoxin]-dithiol. In terms of biological role, has an important function as a repair enzyme for proteins that have been inactivated by oxidation. Catalyzes the reversible oxidation-reduction of methionine sulfoxide in proteins to methionine. The chain is Peptide methionine sulfoxide reductase MsrA from Mycoplasmopsis pulmonis (strain UAB CTIP) (Mycoplasma pulmonis).